The sequence spans 326 residues: Cyclin-dependent kinase 6 (326 aa).

Methionine 1 carries the post-translational modification N-acetylmethionine. Phosphotyrosine is present on residues tyrosine 13 and tyrosine 24. The Protein kinase domain maps to 13 to 300 (YECVAEIGEG…AYSALSHPYF (288 aa)). Residues 19-27 (IGEGAYGKV) and lysine 43 contribute to the ATP site. Phosphothreonine is present on residues threonine 49 and threonine 70. Aspartate 145 serves as the catalytic Proton acceptor. Threonine 177 is subject to Phosphothreonine. Lysine 264 is subject to N6-acetyllysine. Residue threonine 325 is modified to Phosphothreonine.

Belongs to the protein kinase superfamily. CMGC Ser/Thr protein kinase family. CDC2/CDKX subfamily. As to quaternary structure, interaction with D-type G1 cyclins. Cyclin binding promotes enzyme activation by phosphorylation at Thr-177. Binds to RUNX1, CDKN2D, FBXO7 and CDKN2C/p18-INK4c. Forms a cytoplasmic complex with Hsp90/HSP90AB1 and CDC37. FBXO7-binding promotes D-type cyclin binding. Interacts with Kaposi's sarcoma herpesvirus (KSHV) V-cyclin and herpesvirus saimiri (V-cyclin/ECLF2); the CDK6/V-cyclin complex phosphorylates NPM1 and thus lead to viral reactivation by reducing viral LANA levels. Thr-177 phosphorylation and Tyr-24 dephosphorylation promotes kinase activity. In terms of tissue distribution, expressed ubiquitously. Accumulates in squamous cell carcinomas, proliferating hematopoietic progenitor cells, beta-cells of pancreatic islets of Langerhans, and neuroblastomas. Reduced levels in differentiating cells.

The protein localises to the cytoplasm. It localises to the nucleus. Its subcellular location is the cell projection. The protein resides in the ruffle. It is found in the cytoskeleton. The protein localises to the microtubule organizing center. It localises to the centrosome. The enzyme catalyses L-seryl-[protein] + ATP = O-phospho-L-seryl-[protein] + ADP + H(+). It carries out the reaction L-threonyl-[protein] + ATP = O-phospho-L-threonyl-[protein] + ADP + H(+). Its activity is regulated as follows. Inhibited by INK4 proteins (CDKN2C/p18-INK4c), aminopurvalanol, PD0332991, 4-(Pyrazol-4-yl)-pyrimidines and fisetin, a flavonol inhibitor. Activated by Thr-177 phosphorylation and Tyr-24 dephosphorylation. Stimulated by cyclin from herpesvirus saimiri (V-cyclin/ECLF2). Rapidly down-regulated prior to cell differentiation (e.g. erythroid and osteoblast). Serine/threonine-protein kinase involved in the control of the cell cycle and differentiation; promotes G1/S transition. Phosphorylates pRB/RB1 and NPM1. Interacts with D-type G1 cyclins during interphase at G1 to form a pRB/RB1 kinase and controls the entrance into the cell cycle. Involved in initiation and maintenance of cell cycle exit during cell differentiation; prevents cell proliferation and negatively regulates cell differentiation, but is required for the proliferation of specific cell types (e.g. erythroid and hematopoietic cells). Essential for cell proliferation within the dentate gyrus of the hippocampus and the subventricular zone of the lateral ventricles. Required during thymocyte development. Promotes the production of newborn neurons, probably by modulating G1 length. Promotes, at least in astrocytes, changes in patterns of gene expression, changes in the actin cytoskeleton including loss of stress fibers, and enhanced motility during cell differentiation. Prevents myeloid differentiation by interfering with RUNX1 and reducing its transcription transactivation activity, but promotes proliferation of normal myeloid progenitors. Delays senescence. Promotes the proliferation of beta-cells in pancreatic islets of Langerhans. May play a role in the centrosome organization during the cell cycle phases. This Homo sapiens (Human) protein is Cyclin-dependent kinase 6 (CDK6).